A 790-amino-acid chain; its full sequence is Transient receptor potential cation channel subfamily V member 3 (790 aa).

Topologically, residues 1–430 are cytoplasmic; it reads MKAHPKEMVP…TLEPLHTLLH (430 aa). 3 disordered regions span residues 15 to 34, 52 to 71, and 76 to 112; these read RVAA…PAEI, PNPT…MDSN, and ISGN…KEEQ. Over residues 95-105 the composition is skewed to polar residues; it reads ETPSNPNSPSA. ANK repeat units lie at residues 117–148, 170–198, 214–243, 261–291, 298–330, 340–362, and 398–420; these read RRLK…LCRR, TCLM…EEND, EGQT…DVNA, FGET…DITS, NILH…RSGN, DGLT…YILS, and TTDN…HEML. A helical transmembrane segment spans residues 431–460; that stretch reads MKWKKFAKHMFFLSFCFYFFYNITLTLVSY. At 461–479 the chain is on the extracellular side; sequence YRPREEEAIPHPLALTHKM. Residues 480 to 508 form a helical membrane-spanning segment; that stretch reads GWLQLLGRMFVLIWAMCISVKEGIAIFLL. Over 509-519 the chain is Cytoplasmic; sequence RPSDLQSILSD. The chain crosses the membrane as a helical span at residues 520 to 540; it reads AWFHFVFFIQAVLVILSVFLY. Topologically, residues 541–545 are extracellular; sequence LFAYK. Residues 546-566 form a helical membrane-spanning segment; it reads EYLACLVLAMALGWANMLYYT. Topologically, residues 567–569 are cytoplasmic; the sequence is RGF. A helical membrane pass occupies residues 570 to 608; it reads QSMGMYSVMIQKVILHDVLKFLFVYIVFLLGFGVALASL. Over 609-620 the chain is Extracellular; the sequence is IEKCPKDNKDCS. Positions 621–646 form an intramembrane region, pore-forming; it reads SYGSFSDAVLELFKLTIGLGDLNIQQ. Glycine 638 is a Na(+) binding site. Residues 647–649 are Extracellular-facing; sequence NSK. A helical transmembrane segment spans residues 650–686; that stretch reads YPILFLFLLITYVILTFVLLLNMLIALMGETVENVSK. The Cytoplasmic portion of the chain corresponds to 687–790; it reads ESERIWRLQR…EVEEFPETSV (104 aa).

This sequence belongs to the transient receptor (TC 1.A.4) family. TrpV subfamily. TRPV3 sub-subfamily. Homotetramer. May convert from a homotetramer to a homopentamer to allow pore dilation. Interacts with TRPV1; may form a heteromeric channel with TRPV1. Interacts with SNX11; this interaction promotes TRPV3 trafficking from the cell membrane to lysosome for degradation. As to expression, abundantly expressed in CNS. Widely expressed at low levels. Detected in dorsal root ganglion (at protein level). Expressed in the keratinocyte layers of the outer root sheath and, to lesser extent, to the matrix of the hair follicles (at protein level).

The protein resides in the cell membrane. It localises to the cytoplasm. Its subcellular location is the lysosome. It catalyses the reaction Ca(2+)(in) = Ca(2+)(out). The catalysed reaction is Mg(2+)(in) = Mg(2+)(out). It carries out the reaction Na(+)(in) = Na(+)(out). The enzyme catalyses K(+)(in) = K(+)(out). Activated by cannabinoid that binds to the vanilloid binding pocket. Diphenylboronic anhydride induces pore dilation and enhances cation permeability by promoting the conversion to a homopentamer. Functionally, non-selective calcium permeant cation channel. It is activated by innocuous (warm) temperatures and shows an increased response at noxious temperatures greater than 39 degrees Celsius. Activation exhibits an outward rectification. The channel pore can dilate to provide permeability to larger cations. May associate with TRPV1 and may modulate its activity. Is a negative regulator of hair growth and cycling: TRPV3-coupled signaling suppresses keratinocyte proliferation in hair follicles and induces apoptosis and premature hair follicle regression (catagen). The polypeptide is Transient receptor potential cation channel subfamily V member 3 (TRPV3) (Homo sapiens (Human)).